Consider the following 457-residue polypeptide: ATP synthase subunit beta (457 aa).

147 to 154 provides a ligand contact to ATP; the sequence is GGAGVGKT.

It belongs to the ATPase alpha/beta chains family. As to quaternary structure, F-type ATPases have 2 components, CF(1) - the catalytic core - and CF(0) - the membrane proton channel. CF(1) has five subunits: alpha(3), beta(3), gamma(1), delta(1), epsilon(1). CF(0) has three main subunits: a(1), b(2) and c(9-12). The alpha and beta chains form an alternating ring which encloses part of the gamma chain. CF(1) is attached to CF(0) by a central stalk formed by the gamma and epsilon chains, while a peripheral stalk is formed by the delta and b chains.

The protein localises to the cell inner membrane. It catalyses the reaction ATP + H2O + 4 H(+)(in) = ADP + phosphate + 5 H(+)(out). Its function is as follows. Produces ATP from ADP in the presence of a proton gradient across the membrane. The catalytic sites are hosted primarily by the beta subunits. This is ATP synthase subunit beta from Haemophilus influenzae (strain PittEE).